The primary structure comprises 151 residues: uncharacterized protein (151 aa).

Residues methionine 1–alanine 48 are disordered.

This is an uncharacterized protein from Homo sapiens (Human).